Here is a 152-residue protein sequence, read N- to C-terminus: Snaclec agkisacutacin subunit A (152 aa).

Positions 1–23 (MGRFIFVSFGLLVVFLSLSGTAA) are cleaved as a signal peptide. One can recognise a C-type lectin domain in the interval 24–152 (DCSSGWSSYE…EQQDPFVCEA (129 aa)). 3 disulfide bridges follow: C25-C36, C53-C150, and C125-C142. Residues S64, E66, and E70 each contribute to the Ca(2+) site. E151 serves as a coordination point for Ca(2+).

The protein belongs to the snaclec family. Heterodimer with subunit B of AaACP or agkisacutacin; disulfide-linked. Expressed by the venom gland.

Its subcellular location is the secreted. Anticoagulant protein which binds to the gamma-carboxyglutamic acid-domain regions of factors IX (F9) and factor X (F10) in the presence of calcium with a 1 to 1 stoichiometry. Also inhibits platelet aggregation by binding to platelet glycoprotein Ibalpha (GP1BA) and functioning as a blocker of von Willebrand factor (VWF). Is devoid of hemorrhagic and lethal activities. Possesses antithrombotic and thrombolytic activities. Also hydrolyzes the Aalpha-chain of fibrinogen (FGA). Does not affect the Bbeta-chain (FGB) and the gamma chain (FGG). In Deinagkistrodon acutus (Hundred-pace snake), this protein is Snaclec agkisacutacin subunit A.